A 171-amino-acid chain; its full sequence is Disulfide bond formation protein B (171 aa).

Residues 1 to 10 (MQRLLTYRAL) are Cytoplasmic-facing. A helical transmembrane segment spans residues 11-27 (NFILFIASVVAMLFAII). Residues 28–46 (FLQNYKGLEPCPLCIFQRI) lie on the Periplasmic side of the membrane. Cys-38 and Cys-41 are joined by a disulfide. The chain crosses the membrane as a helical span at residues 47-63 (GLMVMGGFSLIAAVGHP). The Cytoplasmic portion of the chain corresponds to 64–70 (KKMGMQL). Residues 71–88 (LLWIGSMAGILWSAGVAA) form a helical membrane-spanning segment. Residues 89 to 145 (RHVWIQHLPADQVPACGPGLDYFLEALPMKQVINQVLSGSGECAEISWRFLGLSIPE) lie on the Periplasmic side of the membrane. The cysteines at positions 104 and 131 are disulfide-linked. A helical membrane pass occupies residues 146–164 (QALILFTALILVNLLVLWR). At 165-171 (IISKRTA) the chain is on the cytoplasmic side.

Belongs to the DsbB family.

The protein localises to the cell inner membrane. In terms of biological role, required for disulfide bond formation in some periplasmic proteins. Acts by oxidizing the DsbA protein. The chain is Disulfide bond formation protein B from Psychrobacter sp. (strain PRwf-1).